A 530-amino-acid chain; its full sequence is Phosphoenolpyruvate carboxykinase (ATP) (530 aa).

3 residues coordinate substrate: arginine 60, tyrosine 195, and lysine 201. ATP is bound by residues lysine 201, histidine 221, and 237–245; that span reads GLSGTGKTT. Mn(2+) contacts are provided by lysine 201 and histidine 221. Position 258 (aspartate 258) interacts with Mn(2+). Residues glutamate 286, arginine 324, and serine 449 each coordinate ATP. Substrate is bound at residue arginine 324.

It belongs to the phosphoenolpyruvate carboxykinase (ATP) family. Mn(2+) serves as cofactor.

It localises to the cytoplasm. The enzyme catalyses oxaloacetate + ATP = phosphoenolpyruvate + ADP + CO2. It functions in the pathway carbohydrate biosynthesis; gluconeogenesis. In terms of biological role, involved in the gluconeogenesis. Catalyzes the conversion of oxaloacetate (OAA) to phosphoenolpyruvate (PEP) through direct phosphoryl transfer between the nucleoside triphosphate and OAA. The chain is Phosphoenolpyruvate carboxykinase (ATP) from Geotalea uraniireducens (strain Rf4) (Geobacter uraniireducens).